The chain runs to 71 residues: Permeability factor 2 (71 aa).

Intrachain disulfides connect C7/C33 and C9/C49.

This sequence belongs to the intercrine alpha (chemokine CxC) family. In terms of assembly, homodimer.

The protein localises to the secreted. In terms of biological role, has chemotactic activity for neutrophils. This is Permeability factor 2 from Oryctolagus cuniculus (Rabbit).